The following is a 156-amino-acid chain: Small ribosomal subunit protein uS7 (156 aa).

The protein belongs to the universal ribosomal protein uS7 family. Part of the 30S ribosomal subunit. Contacts proteins S9 and S11.

One of the primary rRNA binding proteins, it binds directly to 16S rRNA where it nucleates assembly of the head domain of the 30S subunit. Is located at the subunit interface close to the decoding center, probably blocks exit of the E-site tRNA. The protein is Small ribosomal subunit protein uS7 of Rhodopseudomonas palustris (strain BisB5).